Consider the following 1312-residue polypeptide: DNA repair protein RAD50 (1312 aa).

10 residues coordinate ATP: Arg13, Asn36, Gly37, Gly39, Lys40, Thr41, Thr42, Ile65, Asp67, and Gln158. Residue Thr41 participates in Mg(2+) binding. Gln158 lines the Mg(2+) pocket. Coiled-coil stretches lie at residues 185–347 (TKAL…LIRR) and 403–558 (QDLT…LQND). Residue Ser469 is modified to Phosphoserine. Position 568 is a phosphothreonine (Thr568). A coiled-coil region spans residues 640 to 678 (DCTIDEYNDVLEETELSYKTALENLKMHQTTLEFNRKAL). The region spanning 640-741 (DCTIDEYNDV…SLRLLEKHII (102 aa)) is the Zinc-hook domain. Positions 687 and 690 each coordinate Zn(2+). 2 coiled-coil regions span residues 712-741 (DANF…KHII) and 787-1108 (LAES…DIEK).

Belongs to the SMC family. RAD50 subfamily. In terms of assembly, component of the MRN complex composed of two heterodimers RAD50 and MRE11 associated with a single XRS2. The MRN complexes dimerize on DNA to form joined MRN-MRN oligomers required for DNA double-strand break repair. Zn(2+) serves as cofactor.

Its subcellular location is the nucleus. It localises to the chromosome. It catalyses the reaction ATP + H2O = ADP + phosphate + H(+). Component of the MRN complex, which plays a central role in double-strand break (DSB) repair, DNA recombination, maintenance of telomere integrity and meiosis. The MRN complex is involved in the repair of DNA double-strand breaks (DSBs) via homologous recombination (HR), an error-free mechanism which primarily occurs during S and G2 phases. The complex (1) mediates the end resection of damaged DNA, which generates proper single-stranded DNA, a key initial steps in HR, and is (2) required for the recruitment of other repair factors and efficient activation of TEL1/ATM and ATR upon DNA damage. The MRN complex possesses single-strand endonuclease activity and double-strand-specific 3'-5' exonuclease activity, which are provided by MRE11, to initiate end resection, which is required for single-strand invasion and recombination. Within the complex, RAD50 is both required to bind DNA ends and hold them in close proximity and regulate the activity of MRE11. RAD50 provides an ATP-dependent control of MRE11 by positioning DNA ends into the MRE11 active site: ATP-binding induces a large structural change from an open form with accessible MRE11 nuclease sites into a closed form. The MRN complex is also required for the processing of R-loops. The polypeptide is DNA repair protein RAD50 (Saccharomyces cerevisiae (strain ATCC 204508 / S288c) (Baker's yeast)).